A 346-amino-acid polypeptide reads, in one-letter code: Dihydroorotase (346 aa).

Residues His13 and His15 each coordinate Zn(2+). Substrate-binding positions include 15 to 17 and Asn41; that span reads HLR. Zn(2+) is bound by residues Lys99, His136, and His174. Lys99 is modified (N6-carboxylysine). A substrate-binding site is contributed by His136. Leu219 provides a ligand contact to substrate. Position 247 (Asp247) interacts with Zn(2+). Asp247 is a catalytic residue. Substrate is bound by residues His251 and Ala263.

The protein belongs to the metallo-dependent hydrolases superfamily. DHOase family. Class II DHOase subfamily. Homodimer. The cofactor is Zn(2+).

It carries out the reaction (S)-dihydroorotate + H2O = N-carbamoyl-L-aspartate + H(+). The protein operates within pyrimidine metabolism; UMP biosynthesis via de novo pathway; (S)-dihydroorotate from bicarbonate: step 3/3. Functionally, catalyzes the reversible cyclization of carbamoyl aspartate to dihydroorotate. The polypeptide is Dihydroorotase (Chelativorans sp. (strain BNC1)).